The following is a 491-amino-acid chain: UDP-N-acetylmuramate--L-alanine ligase (491 aa).

ATP is bound at residue 126–132; that stretch reads GTHGKTT.

Belongs to the MurCDEF family.

It is found in the cytoplasm. The enzyme catalyses UDP-N-acetyl-alpha-D-muramate + L-alanine + ATP = UDP-N-acetyl-alpha-D-muramoyl-L-alanine + ADP + phosphate + H(+). It functions in the pathway cell wall biogenesis; peptidoglycan biosynthesis. Functionally, cell wall formation. The sequence is that of UDP-N-acetylmuramate--L-alanine ligase from Klebsiella pneumoniae (strain 342).